A 131-amino-acid polypeptide reads, in one-letter code: MSEKIGILAIGHGSRLPYNKEVVSEIAATIAKKHPDYVIKAGFMENTLPTVMEALADFDGTGVTKIIAVPVFLASGVHITEDIPEILKLDPETNEGKITVDGNEIPVTFGKPLGHHELLADLVFERAMEVM.

His-12 (proton acceptor) is an active-site residue. His-12 and His-78 together coordinate Co(2+). Ni(2+)-binding residues include His-12 and His-78. 73–78 (LASGVH) contributes to the substrate binding site.

The protein belongs to the CbiX family. CbiXS subfamily. In terms of assembly, homotetramer; dimer of dimers.

It carries out the reaction Co-sirohydrochlorin + 2 H(+) = sirohydrochlorin + Co(2+). The enzyme catalyses Ni-sirohydrochlorin + 2 H(+) = sirohydrochlorin + Ni(2+). Its pathway is cofactor biosynthesis; adenosylcobalamin biosynthesis; cob(II)yrinate a,c-diamide from sirohydrochlorin (anaerobic route): step 1/10. Functionally, catalyzes the insertion of Co(2+) into sirohydrochlorin as part of the anaerobic pathway to cobalamin biosynthesis. Involved in the biosynthesis of the unique nickel-containing tetrapyrrole coenzyme F430, the prosthetic group of methyl-coenzyme M reductase (MCR), which plays a key role in methanogenesis and anaerobic methane oxidation. Catalyzes the insertion of Ni(2+) into sirohydrochlorin to yield Ni-sirohydrochlorin. The protein is Sirohydrochlorin cobaltochelatase of Methanococcoides burtonii (strain DSM 6242 / NBRC 107633 / OCM 468 / ACE-M).